The chain runs to 243 residues: uncharacterized protein (243 aa).

The tract at residues 157 to 181 is disordered; it reads SEETKEQPDATTSEKSRSPECPKTT.

This is an uncharacterized protein from Rattus norvegicus (Rat).